We begin with the raw amino-acid sequence, 139 residues long: Thyrotropin subunit beta (139 aa).

The first 20 residues, 1–20, serve as a signal peptide directing secretion; that stretch reads MELSVAMCGLLCLLFSQAVP. 6 disulfide bridges follow: cysteine 22–cysteine 72, cysteine 36–cysteine 87, cysteine 39–cysteine 127, cysteine 47–cysteine 103, cysteine 51–cysteine 105, and cysteine 108–cysteine 115. Asparagine 43 carries N-linked (GlcNAc...) asparagine glycosylation.

Belongs to the glycoprotein hormones subunit beta family. In terms of assembly, heterodimer of a common alpha chain and a unique beta chain which confers biological specificity to thyrotropin, lutropin, follitropin and gonadotropin.

Its subcellular location is the secreted. Indispensable for the control of thyroid structure and metabolism. May play some role in the biological processes of the immature fishes. The sequence is that of Thyrotropin subunit beta (tshb) from Salmo salar (Atlantic salmon).